We begin with the raw amino-acid sequence, 942 residues long: E3 ubiquitin-protein ligase HACE1 (942 aa).

7 ANK repeats span residues Leu-23–Phe-55, Val-64–Tyr-93, Ser-97–Ile-126, Glu-130–Val-159, Met-163–Arg-192, Ser-196–Asp-226, and Asn-228–Pro-253. The segment at Lys-428 to Ser-459 is disordered. Positions Glu-447–Ser-459 are enriched in basic and acidic residues. One can recognise an HECT domain in the interval Asn-607–Ala-942. The active-site Glycyl thioester intermediate is Cys-909.

The protein localises to the golgi apparatus. It is found in the golgi stack membrane. It localises to the cytoplasm. Its subcellular location is the endoplasmic reticulum. It catalyses the reaction S-ubiquitinyl-[E2 ubiquitin-conjugating enzyme]-L-cysteine + [acceptor protein]-L-lysine = [E2 ubiquitin-conjugating enzyme]-L-cysteine + N(6)-ubiquitinyl-[acceptor protein]-L-lysine.. Its pathway is protein modification; protein ubiquitination. Its function is as follows. E3 ubiquitin-protein ligase involved in Golgi membrane fusion and regulation of small GTPases. Acts as a regulator of Golgi membrane dynamics during the cell cycle: recruited to Golgi membrane by Rab proteins and regulates postmitotic Golgi membrane fusion. Acts by mediating ubiquitination during mitotic Golgi disassembly, ubiquitination serving as a signal for Golgi reassembly later, after cell division. The protein is E3 ubiquitin-protein ligase HACE1 (HACE1) of Gallus gallus (Chicken).